The sequence spans 557 residues: Potassium-transporting ATPase potassium-binding subunit (557 aa).

12 helical membrane passes run 5 to 25 (GFLL…PLGS), 63 to 83 (LCAI…MLLG), 132 to 152 (GLTV…FAFI), 170 to 190 (LLRI…LFFI), 253 to 273 (FVQM…FGEV), 283 to 303 (LLWA…WAEV), 329 to 349 (VLVS…AVIA), 356 to 376 (ALGG…FGGV), 379 to 399 (GLYG…LMIG), 416 to 436 (LTAL…ALAM), 484 to 504 (LLAF…MAIA), and 526 to 546 (LFVG…FIPA).

The protein belongs to the KdpA family. The system is composed of three essential subunits: KdpA, KdpB and KdpC.

The protein localises to the cell inner membrane. Part of the high-affinity ATP-driven potassium transport (or Kdp) system, which catalyzes the hydrolysis of ATP coupled with the electrogenic transport of potassium into the cytoplasm. This subunit binds the periplasmic potassium ions and delivers the ions to the membrane domain of KdpB through an intramembrane tunnel. This is Potassium-transporting ATPase potassium-binding subunit from Shigella boydii serotype 4 (strain Sb227).